Consider the following 335-residue polypeptide: Mitochondrial fission regulator 1 (335 aa).

The N-terminal 48 residues, 1–48 (MIRWFKCFMRMIFEQVGLNMESVLWSSKPYGSSRSIVRKIGTNLSLIQ), are a transit peptide targeting the mitochondrion. Residues 134-170 (RSTVIANEEAMQKISALENELATLRAQIAKIVILQEQ) adopt a coiled-coil conformation. Residues 182–309 (ASAAVPCVPP…DKVIPKSETN (128 aa)) form a necessary and sufficient to promote mitochondrial fission region. The disordered stretch occupies residues 219-240 (RKNRKTNSGPIPTENGPKKPEI).

Belongs to the MTFR1 family. As to expression, widely expressed in embryonic tissues with higher expression in cartilage and hypertrophic chondrocytes. Specifically expressed in hypertrophic chondrocytes (at protein level).

Its subcellular location is the mitochondrion. In terms of biological role, may play a role in mitochondrial aerobic respiration. May also regulate mitochondrial organization and fission. The protein is Mitochondrial fission regulator 1 (MTFR1) of Gallus gallus (Chicken).